The sequence spans 300 residues: Jacalin-related lectin 33 (300 aa).

The interval 1–20 is disordered; that stretch reads MAQKVEAGGGAGGASWDDGV. N-acetylalanine is present on Ala-2. 2 consecutive Jacalin-type lectin domains span residues 2–146 and 154–297; these read AQKV…YFAT and AKKL…HVMP.

Belongs to the jacalin lectin family. Component of the PYK10 complex, at least composed of PYK10/BGLU23, BGLU21, BGLU22, JAL22, JAL23, PBP1/JAL30, PBP2/JAL31, JAL32, JAL33, JAL34, JAL35, GLL22 and GLL23.

Its function is as follows. Sugar-binding protein showing significant affinity for (Glc alpha(1-4)Glc)(3) maltohexaose, (Glc alpha(1-6)Glc)(3) isomaltohexaose, Gal alpha(1-4)Gal beta(1-4)Glc, GalNAc alpha(1-3)(Fuc alpha(1-2)) and Gal beta(1-3)(Fuc alpha(1-4))GlcNAc beta(1-3)Gal beta(1-4)Glc. The sequence is that of Jacalin-related lectin 33 (JAL33) from Arabidopsis thaliana (Mouse-ear cress).